Here is a 124-residue protein sequence, read N- to C-terminus: Nascent polypeptide-associated complex protein (124 aa).

The region spanning 7–74 (GLNPRKMKQM…PESRERGDSG (68 aa)) is the NAC-A/B domain. The segment at 53–124 (AQGQQTYQVV…DLAAAVQKLE (72 aa)) is disordered. Positions 74–93 (GSEDDSETESGGEFSEDDVE) are enriched in acidic residues.

It belongs to the NAC-alpha family. In terms of assembly, homodimer. Interacts with the ribosome. Binds ribosomal RNA.

Contacts the emerging nascent chain on the ribosome. This chain is Nascent polypeptide-associated complex protein, found in Natronomonas pharaonis (strain ATCC 35678 / DSM 2160 / CIP 103997 / JCM 8858 / NBRC 14720 / NCIMB 2260 / Gabara) (Halobacterium pharaonis).